A 362-amino-acid polypeptide reads, in one-letter code: METTVRKQKKNLETKKPSIYSLQLHEMQDWLKEQGEPKFRAGQIFDWLYKKRVKNYEDMSNLSKGLREKLSNSFDITTLHTLVKQTSSDGTIKFLFQLYDGYSIETVLMRHEYGNSICVTTQVGCRIGCTFCASTLGGLKRNLEAGEIVAQVVEVQRALDESEERVSSLVVMGIGEPFDNYDNLMGFLRIINHEKGLHIGARHMTVSTSGIIPKIYKFAEEDLQINFAISLHAPNSELRSKLMPINRAYKLPDLMEAIKYYVNRTGRRITFEYGLFGGENDQVEHAEELAALLKGVKCHVNLIPVNYVPERDYVRTPREQIFLFEKTLKDRGVNVTIRREQGHDIDAACGQLRAKERKEETR.

Glutamate 105 acts as the Proton acceptor in catalysis. In terms of domain architecture, Radical SAM core spans 111–344; sequence HEYGNSICVT…VTIRREQGHD (234 aa). A disulfide bridge links cysteine 118 with cysteine 349. Positions 125, 129, and 132 each coordinate [4Fe-4S] cluster. S-adenosyl-L-methionine contacts are provided by residues 175–176, serine 207, 230–232, and asparagine 306; these read GE and SLH. The S-methylcysteine intermediate role is filled by cysteine 349.

The protein belongs to the radical SAM superfamily. RlmN family. It depends on [4Fe-4S] cluster as a cofactor.

The protein resides in the cytoplasm. The enzyme catalyses adenosine(2503) in 23S rRNA + 2 reduced [2Fe-2S]-[ferredoxin] + 2 S-adenosyl-L-methionine = 2-methyladenosine(2503) in 23S rRNA + 5'-deoxyadenosine + L-methionine + 2 oxidized [2Fe-2S]-[ferredoxin] + S-adenosyl-L-homocysteine. It catalyses the reaction adenosine(37) in tRNA + 2 reduced [2Fe-2S]-[ferredoxin] + 2 S-adenosyl-L-methionine = 2-methyladenosine(37) in tRNA + 5'-deoxyadenosine + L-methionine + 2 oxidized [2Fe-2S]-[ferredoxin] + S-adenosyl-L-homocysteine. Specifically methylates position 2 of adenine 2503 in 23S rRNA and position 2 of adenine 37 in tRNAs. The protein is Probable dual-specificity RNA methyltransferase RlmN of Bacillus anthracis (strain CDC 684 / NRRL 3495).